The chain runs to 190 residues: Protein LZIC (190 aa).

Residues 2–63 (ASRGKTETSK…SEFNDSLKKI (62 aa)) adopt a coiled-coil conformation.

The protein belongs to the CTNNBIP1 family. As to quaternary structure, does not interact with CTNNB1. In terms of tissue distribution, ubiquitously expressed, with highest levels in kidney. Up-regulated in several cases of gastric cancers.

The sequence is that of Protein LZIC (LZIC) from Homo sapiens (Human).